Reading from the N-terminus, the 159-residue chain is Cyclic pyranopterin monophosphate synthase (159 aa).

Substrate-binding positions include 75–77 and 113–114; these read LCH and ME. D128 is a catalytic residue.

This sequence belongs to the MoaC family. In terms of assembly, homohexamer; trimer of dimers.

It catalyses the reaction (8S)-3',8-cyclo-7,8-dihydroguanosine 5'-triphosphate = cyclic pyranopterin phosphate + diphosphate. The protein operates within cofactor biosynthesis; molybdopterin biosynthesis. Functionally, catalyzes the conversion of (8S)-3',8-cyclo-7,8-dihydroguanosine 5'-triphosphate to cyclic pyranopterin monophosphate (cPMP). The polypeptide is Cyclic pyranopterin monophosphate synthase (Heliobacterium modesticaldum (strain ATCC 51547 / Ice1)).